We begin with the raw amino-acid sequence, 454 residues long: MNIVILAAGMGKRMYSDLPKVLHPVAGRPMLAHVLDTARALSPSRLVVVVGHGAARVREAVAADDVAFAEQPQQLGTGHAVMQALPLLDDSQPTLVLYGDVPLTSAATLQALVAEAGTQRLGVLTVEMPDPTGYGRIVRDAAGSIVRIVEQKDASEAEKAIREINTGIIVCPTGHLRKWLSTLRNDNAQGEYYLTDTVERAVADGVETVSAQPAAIWETLGVNSKLQLAEVERIHQGNQARRLLEAGVTLLDPARIDVRGELSCGRDVTIDVGCVFEGRVHLEDGVRIGAHCVIRNSTVGAGAQVHPFCHIDEARVGPAGRIGPYARLRPGTELGEDVHIGNFVEVKNAQVAAHSKANHLAYVGDATVGSRVNIGAGTITCNYDGVNKHRTVIEDDVFIGSDTQLVAPVTVRRGATLGAGTTLTKEAPADKLTLSRAKQLTIDAWQRPVKQPKK.

A pyrophosphorylase region spans residues 1–225 (MNIVILAAGM…IWETLGVNSK (225 aa)). UDP-N-acetyl-alpha-D-glucosamine-binding positions include 6 to 9 (LAAG), K20, Q71, 76 to 77 (GT), 98 to 100 (YGD), G135, E150, N165, and N223. D100 contacts Mg(2+). Mg(2+) is bound at residue N223. Residues 226-246 (LQLAEVERIHQGNQARRLLEA) form a linker region. Residues 247-454 (GVTLLDPARI…WQRPVKQPKK (208 aa)) form an N-acetyltransferase region. Residues R329 and K347 each coordinate UDP-N-acetyl-alpha-D-glucosamine. H359 serves as the catalytic Proton acceptor. UDP-N-acetyl-alpha-D-glucosamine-binding residues include Y362 and N373. Acetyl-CoA-binding positions include A376, 382 to 383 (NY), S401, A419, and R436.

It in the N-terminal section; belongs to the N-acetylglucosamine-1-phosphate uridyltransferase family. In the C-terminal section; belongs to the transferase hexapeptide repeat family. Homotrimer. Requires Mg(2+) as cofactor.

Its subcellular location is the cytoplasm. The catalysed reaction is alpha-D-glucosamine 1-phosphate + acetyl-CoA = N-acetyl-alpha-D-glucosamine 1-phosphate + CoA + H(+). It catalyses the reaction N-acetyl-alpha-D-glucosamine 1-phosphate + UTP + H(+) = UDP-N-acetyl-alpha-D-glucosamine + diphosphate. It participates in nucleotide-sugar biosynthesis; UDP-N-acetyl-alpha-D-glucosamine biosynthesis; N-acetyl-alpha-D-glucosamine 1-phosphate from alpha-D-glucosamine 6-phosphate (route II): step 2/2. It functions in the pathway nucleotide-sugar biosynthesis; UDP-N-acetyl-alpha-D-glucosamine biosynthesis; UDP-N-acetyl-alpha-D-glucosamine from N-acetyl-alpha-D-glucosamine 1-phosphate: step 1/1. The protein operates within bacterial outer membrane biogenesis; LPS lipid A biosynthesis. Functionally, catalyzes the last two sequential reactions in the de novo biosynthetic pathway for UDP-N-acetylglucosamine (UDP-GlcNAc). The C-terminal domain catalyzes the transfer of acetyl group from acetyl coenzyme A to glucosamine-1-phosphate (GlcN-1-P) to produce N-acetylglucosamine-1-phosphate (GlcNAc-1-P), which is converted into UDP-GlcNAc by the transfer of uridine 5-monophosphate (from uridine 5-triphosphate), a reaction catalyzed by the N-terminal domain. In Cupriavidus necator (strain ATCC 17699 / DSM 428 / KCTC 22496 / NCIMB 10442 / H16 / Stanier 337) (Ralstonia eutropha), this protein is Bifunctional protein GlmU.